Here is a 370-residue protein sequence, read N- to C-terminus: DNA-directed RNA polymerase II subunit GRINL1A (370 aa).

A disordered region spans residues 1–20; it reads MSSLPRGFEPQTPEDLGQRS. Residues 15–69 are a coiled coil; that stretch reads DLGQRSLAELREMLKRQERLLRNVKFICKLPDKGKKISDAVTKLKAAIAEREEVR. Positions 29-68 are important for transcription repressor activity; the sequence is KRQERLLRNVKFICKLPDKGKKISDAVTKLKAAIAEREEV. 3 disordered regions span residues 93–172, 204–226, and 241–283; these read DGDR…ASEG, DPTE…WSGP, and KNPM…RRDR. Residues 101–131 show a composition bias toward polar residues; that stretch reads NSDQILDTSSPVPGCSSVANITSSQTTSRQQ. The segment covering 138-152 has biased composition (basic and acidic residues); sequence RGGDAEAAEAEHTVS. A compositionally biased stretch (low complexity) spans 155–170; that stretch reads PTSSSGAPAPSSSQAS. A compositionally biased stretch (basic and acidic residues) spans 205–214; that stretch reads PTEHHSEGNR. The interaction with Pol II stretch occupies residues 228 to 299; that stretch reads KKPHYMEVLE…TAARLLPLHH (72 aa). Positions 254–266 are enriched in polar residues; that stretch reads VLPSQPRDSSSAC. At serine 271 the chain carries Phosphoserine. The important for transcription repressor activity stretch occupies residues 300 to 315; that stretch reads LPTQLLSIEESLALQR. Residues 303-328 are a coiled coil; the sequence is QLLSIEESLALQRQQKQSYEEIQAKL. Positions 316–341 are interaction with Pol II; that stretch reads QQKQSYEEIQAKLAAQKLAERLNIKM. A disordered region spans residues 340 to 370; sequence KMQSYNPEGESSRKYREVRDEDDDQSSEDEF. The segment covering 349 to 358 has biased composition (basic and acidic residues); sequence ESSRKYREVR. A compositionally biased stretch (acidic residues) spans 359 to 370; that stretch reads DEDDDQSSEDEF.

It belongs to the GRINL1 family. In terms of assembly, component of the Pol II(G) complex, which contains the RNA polymerase II (Pol II) core complex subunits and POLR2M and appears to be an abundant form of Pol II. Dephosphorylated at Ser-271 by the PNUTS-PP1 complex, promoting RNA polymerase II transcription pause-release.

The protein resides in the nucleus. Appears to be a stable component of the Pol II(G) complex form of RNA polymerase II (Pol II). Pol II synthesizes mRNA precursors and many functional non-coding RNAs and is the central component of the basal RNA polymerase II transcription machinery. May play a role in Mediator complex-dependent regulation of transcription activation. Acts in vitro as a negative regulator of transcriptional activation; this repression is relieved by the Mediator complex, which restores Pol II(G) activator-dependent transcription to a level equivalent to that of Pol II. The chain is DNA-directed RNA polymerase II subunit GRINL1A (POLR2M) from Bos taurus (Bovine).